The chain runs to 428 residues: Secernin-2 (428 aa).

Residue cysteine 10 is part of the active site.

Belongs to the peptidase C69 family. Secernin subfamily.

The sequence is that of Secernin-2 (scrn2) from Xenopus laevis (African clawed frog).